Reading from the N-terminus, the 693-residue chain is Elongation factor G (693 aa).

Residues 9 to 283 (ERVRNIGIIA…AVCDYLPSPL (275 aa)) enclose the tr-type G domain. Residues 18–25 (AHIDAGKT), 82–86 (DTPGH), and 136–139 (NKMD) each bind GTP.

It belongs to the TRAFAC class translation factor GTPase superfamily. Classic translation factor GTPase family. EF-G/EF-2 subfamily.

The protein localises to the cytoplasm. In terms of biological role, catalyzes the GTP-dependent ribosomal translocation step during translation elongation. During this step, the ribosome changes from the pre-translocational (PRE) to the post-translocational (POST) state as the newly formed A-site-bound peptidyl-tRNA and P-site-bound deacylated tRNA move to the P and E sites, respectively. Catalyzes the coordinated movement of the two tRNA molecules, the mRNA and conformational changes in the ribosome. The protein is Elongation factor G of Dehalococcoides mccartyi (strain ATCC BAA-2100 / JCM 16839 / KCTC 5957 / BAV1).